The following is a 203-amino-acid chain: Tic20 family protein Ycf60 (203 aa).

A run of 5 helical transmembrane segments spans residues 2-22 (IRLF…RLAI), 51-71 (IIPY…YVLP), 84-104 (ILLP…VTFF), 131-151 (ILLF…PIEF), and 153-173 (ISFI…STIT).

Belongs to the Tic20 family.

Its subcellular location is the plastid. It localises to the chloroplast membrane. The protein is Tic20 family protein Ycf60 (ycf60) of Porphyra purpurea (Red seaweed).